A 268-amino-acid chain; its full sequence is Ribosomal RNA small subunit methyltransferase A (268 aa).

S-adenosyl-L-methionine-binding residues include asparagine 11, leucine 13, glycine 37, glutamate 58, aspartate 86, and asparagine 104.

This sequence belongs to the class I-like SAM-binding methyltransferase superfamily. rRNA adenine N(6)-methyltransferase family. RsmA subfamily.

Its subcellular location is the cytoplasm. The enzyme catalyses adenosine(1518)/adenosine(1519) in 16S rRNA + 4 S-adenosyl-L-methionine = N(6)-dimethyladenosine(1518)/N(6)-dimethyladenosine(1519) in 16S rRNA + 4 S-adenosyl-L-homocysteine + 4 H(+). Specifically dimethylates two adjacent adenosines (A1518 and A1519) in the loop of a conserved hairpin near the 3'-end of 16S rRNA in the 30S particle. May play a critical role in biogenesis of 30S subunits. The polypeptide is Ribosomal RNA small subunit methyltransferase A (Campylobacter fetus subsp. fetus (strain 82-40)).